Reading from the N-terminus, the 447-residue chain is Transcriptional enhancer factor TEF-4 (447 aa).

Disordered stretches follow at residues 1 to 46 and 183 to 218; these read MGEP…GVWS and TPFT…PPAW. A compositionally biased stretch (low complexity) spans 11-20; that stretch reads DDGSGWTGSE. Positions 25–40 are enriched in gly residues; that stretch reads EGTGGSEGAGGDGGPD. Positions 38 to 114 form a DNA-binding region, TEA; it reads GPDAEGVWSP…QVLARRKSRE (77 aa). Residues 172-447 form a transcriptional activation region; it reads WNVPDVKPFS…QHHIYRLVRD (276 aa). Low complexity predominate over residues 183–206; sequence TPFTLSLTPPSTDLPGYEPPQALS. Positions 207–216 are enriched in pro residues; that stretch reads PLPPPTPSPP.

As to quaternary structure, interacts with YAP1 and WWTR1/TAZ.

It localises to the nucleus. Its function is as follows. Transcription factor which plays a key role in the Hippo signaling pathway, a pathway involved in organ size control and tumor suppression by restricting proliferation and promoting apoptosis. The core of this pathway is composed of a kinase cascade wherein MST1/MST2, in complex with its regulatory protein SAV1, phosphorylates and activates LATS1/2 in complex with its regulatory protein MOB1, which in turn phosphorylates and inactivates YAP1 oncoprotein and WWTR1/TAZ. Acts by mediating gene expression of YAP1 and WWTR1/TAZ, thereby regulating cell proliferation, migration and epithelial mesenchymal transition (EMT) induction. Binds to the SPH and GT-IIC 'enhansons' (5'-GTGGAATGT-3'). May be involved in the gene regulation of neural development. Binds to the M-CAT motif. The protein is Transcriptional enhancer factor TEF-4 (TEAD2) of Homo sapiens (Human).